The following is a 520-amino-acid chain: Bifunctional dihydrofolate reductase-thymidylate synthase (520 aa).

The 204-residue stretch at 26–229 (AFSIVVALDK…LEFEICKYVP (204 aa)) folds into the DHFR domain. A substrate-binding site is contributed by V30. NADP(+)-binding positions include A32 and 38–44 (GIGDGES). Substrate is bound at residue D52. NADP(+) is bound by residues 81-83 (RKT), 102-105 (LSSK), and 157-164 (GGAQVYAD). Substrate is bound by residues Y162 and T180. Residues 234-520 (ERQYLELIDR…HPPIKMEMAV (287 aa)) form a thymidylate synthase region. Position 254 (R254) interacts with dUMP. C400 is a catalytic residue. DUMP contacts are provided by residues H401, 421-425 (QRSCD), N433, and 463-465 (HVY).

The protein in the N-terminal section; belongs to the dihydrofolate reductase family. This sequence in the C-terminal section; belongs to the thymidylate synthase family.

It carries out the reaction (6S)-5,6,7,8-tetrahydrofolate + NADP(+) = 7,8-dihydrofolate + NADPH + H(+). The enzyme catalyses dUMP + (6R)-5,10-methylene-5,6,7,8-tetrahydrofolate = 7,8-dihydrofolate + dTMP. It participates in cofactor biosynthesis; tetrahydrofolate biosynthesis; 5,6,7,8-tetrahydrofolate from 7,8-dihydrofolate: step 1/1. Its function is as follows. Bifunctional enzyme. Involved in de novo dTMP biosynthesis. Key enzyme in folate metabolism. Catalyzes an essential reaction for de novo glycine and purine synthesis, DNA precursor synthesis, and for the conversion of dUMP to dTMP. This chain is Bifunctional dihydrofolate reductase-thymidylate synthase, found in Leishmania amazonensis.